Reading from the N-terminus, the 59-residue chain is Large ribosomal subunit protein uL30 (59 aa).

The protein belongs to the universal ribosomal protein uL30 family. Part of the 50S ribosomal subunit.

In Desulforamulus reducens (strain ATCC BAA-1160 / DSM 100696 / MI-1) (Desulfotomaculum reducens), this protein is Large ribosomal subunit protein uL30.